The chain runs to 380 residues: Cytochrome b (380 aa).

The next 4 helical transmembrane spans lie at 34 to 54, 78 to 99, 114 to 134, and 179 to 199; these read FGSLLAMCLMTQIITGLLLAT, WLIRNLHANGASFFFICIYLHI, WNTGVILLLTLMATAFVGYVL, and FFALHFLLPFIIAGITIIHLA. The heme b site is built by H84 and H98. Heme b contacts are provided by H183 and H197. Position 202 (H202) interacts with a ubiquinone. Transmembrane regions (helical) follow at residues 227–247, 289–309, 321–341, and 348–368; these read LKDILGLALMITPLLTLALFS, LGGVLALAASVLILLLIPFLH, LSQILFWLLAANLLILTWIGS, and FIIIGQLASFSYFTTILILFP.

It belongs to the cytochrome b family. The cytochrome bc1 complex contains 11 subunits: 3 respiratory subunits (MT-CYB, CYC1 and UQCRFS1), 2 core proteins (UQCRC1 and UQCRC2) and 6 low-molecular weight proteins (UQCRH/QCR6, UQCRB/QCR7, UQCRQ/QCR8, UQCR10/QCR9, UQCR11/QCR10 and a cleavage product of UQCRFS1). This cytochrome bc1 complex then forms a dimer. It depends on heme b as a cofactor.

It localises to the mitochondrion inner membrane. Its function is as follows. Component of the ubiquinol-cytochrome c reductase complex (complex III or cytochrome b-c1 complex) that is part of the mitochondrial respiratory chain. The b-c1 complex mediates electron transfer from ubiquinol to cytochrome c. Contributes to the generation of a proton gradient across the mitochondrial membrane that is then used for ATP synthesis. The chain is Cytochrome b (MT-CYB) from Callipepla gambelii (Gambel's quail).